A 206-amino-acid polypeptide reads, in one-letter code: Uridine kinase (206 aa).

Residue 11–18 coordinates ATP; the sequence is GGSASGKT.

This sequence belongs to the uridine kinase family.

Its subcellular location is the cytoplasm. It catalyses the reaction uridine + ATP = UMP + ADP + H(+). It carries out the reaction cytidine + ATP = CMP + ADP + H(+). The protein operates within pyrimidine metabolism; CTP biosynthesis via salvage pathway; CTP from cytidine: step 1/3. Its pathway is pyrimidine metabolism; UMP biosynthesis via salvage pathway; UMP from uridine: step 1/1. This Lactococcus lactis subsp. cremoris (strain MG1363) protein is Uridine kinase.